The chain runs to 754 residues: Zinc finger protein with KRAB and SCAN domains 7 (754 aa).

Residue K28 forms a Glycyl lysine isopeptide (Lys-Gly) (interchain with G-Cter in SUMO2) linkage. An SCAN box domain is found at 54–136 (RLHFRQLCYH…AVVEDFQRHL (83 aa)). The tract at residues 157-215 (TALGTTKESPPTSPLSGGSAPGAHLEPPYDPGTHHLPSGDFAQCTSPVPTLPQVGNSGD) is disordered. Composition is skewed to polar residues over residues 158-172 (ALGT…SPLS) and 199-215 (QCTS…NSGD). Residues 231–306 (VAYEDLSVDY…TSGGLFGVVP (76 aa)) form the KRAB domain. 10 consecutive C2H2-type zinc fingers follow at residues 383–405 (YRCD…QRIH), 411–433 (YECN…LRTH), 439–461 (YECS…QRLH), 467–489 (YKCN…QRTH), 495–517 (YECN…QVLH), 523–545 (YKCN…QRIH), 551–573 (YECS…QSLH), 579–601 (YKCS…ERIH), 607–629 (FECS…QRLH), and 635–657 (YKCN…QRIH). A C2H2-type 11; degenerate zinc finger spans residues 663–685 (YECNECGKVFSYSSSLMVHQRTH). 2 consecutive C2H2-type zinc fingers follow at residues 691–713 (YKCN…QRVH) and 719–741 (YECS…QRTH). A disordered region spans residues 735-754 (NHHQRTHTGEKSSGLAWSVS).

It belongs to the krueppel C2H2-type zinc-finger protein family.

It is found in the nucleus. May be involved in transcriptional regulation. This Homo sapiens (Human) protein is Zinc finger protein with KRAB and SCAN domains 7 (ZKSCAN7).